The following is a 105-amino-acid chain: Large ribosomal subunit protein P2 (105 aa).

Residues 84-105 form a disordered region; sequence AEAKKEEPEEEADDDMGFGLFD.

It belongs to the eukaryotic ribosomal protein P1/P2 family. In terms of assembly, P1 and P2 exist as dimers at the large ribosomal subunit. In terms of processing, phosphorylated.

In terms of biological role, plays an important role in the elongation step of protein synthesis. The chain is Large ribosomal subunit protein P2 (ARP-1) from Leishmania donovani.